A 249-amino-acid chain; its full sequence is Proteasome activator complex subunit 1 (249 aa).

Residues 60 to 102 (PLDIPVPDPVKEKEKEERKKQQEKEEKDEKKKGDEDDKGPPCG) form a disordered region. Over residues 68-98 (PVKEKEKEERKKQQEKEEKDEKKKGDEDDKG) the composition is skewed to basic and acidic residues.

This sequence belongs to the PA28 family. As to quaternary structure, heterodimer of PSME1 and PSME2, which forms a hexameric ring. PSME1 can form homoheptamers.

Its function is as follows. Implicated in immunoproteasome assembly and required for efficient antigen processing. The PA28 activator complex enhances the generation of class I binding peptides by altering the cleavage pattern of the proteasome. In Rattus norvegicus (Rat), this protein is Proteasome activator complex subunit 1 (Psme1).